Consider the following 546-residue polypeptide: E3 ubiquitin-protein ligase NEURL1B (546 aa).

The 157-residue stretch at 38-194 (APRFHAQAKG…ITDEVQLLES (157 aa)) folds into the NHR 1 domain. Thr199 is subject to Phosphothreonine. Positions 270 to 424 (ELRFHATRGP…GVAGQLRLLG (155 aa)) constitute an NHR 2 domain. Residues 429 to 490 (SSETMTPSGS…FSAPEPTGSR (62 aa)) are disordered. Residues 457-471 (SSSASESSLVTAPSS) are compositionally biased toward low complexity. The segment at 494-534 (CTVCFDSEVDTVIYTCGHMCLCHGCGLRLRRQARACCPICR) adopts an RING-type zinc-finger fold.

Interacts with DLL1 and DLL4. As to expression, expressed in the limb buds and dorsal root ganglia. Expressed in brain and kidney and at low levels in the heart.

Its subcellular location is the cytoplasm. The enzyme catalyses S-ubiquitinyl-[E2 ubiquitin-conjugating enzyme]-L-cysteine + [acceptor protein]-L-lysine = [E2 ubiquitin-conjugating enzyme]-L-cysteine + N(6)-ubiquitinyl-[acceptor protein]-L-lysine.. Its pathway is protein modification; protein ubiquitination. Its function is as follows. E3 ubiquitin-protein ligase involved in regulation of the Notch pathway through influencing the stability and activity of several Notch ligands. The sequence is that of E3 ubiquitin-protein ligase NEURL1B (Neurl1b) from Mus musculus (Mouse).